We begin with the raw amino-acid sequence, 134 residues long: Small ribosomal subunit protein bS16 (134 aa).

Residues 79–134 are disordered; it reads AGIAKRPSRNNPTKGEPGKKAQERLALAKQAEEEAAAKAAEAAAAAAAPAEEAASE. A compositionally biased stretch (low complexity) spans 115 to 134; that stretch reads AKAAEAAAAAAAPAEEAASE.

Belongs to the bacterial ribosomal protein bS16 family.

In Brucella suis (strain ATCC 23445 / NCTC 10510), this protein is Small ribosomal subunit protein bS16.